A 316-amino-acid chain; its full sequence is protein SLOW GREEN 1, chloroplastic (316 aa).

Residues 1 to 39 (MISSLSASSSLVSSFVAVKATPVTGPLIPRRDLLSIRIR) constitute a chloroplast transit peptide. TPR repeat units lie at residues 118 to 151 (VETL…QPEE), 152 to 185 (TEWK…NPLS), 226 to 259 (RDVR…DPKD), and 261 to 293 (RPYF…SPKK).

Ubiquitous. Preferentially expressed in newly formed green tissues.

The protein localises to the plastid. Its subcellular location is the chloroplast. Its function is as follows. Required for the early stage of chloroplast development. May be involved in chloroplast protein biosynthesis and/or degradation. The polypeptide is protein SLOW GREEN 1, chloroplastic (Arabidopsis thaliana (Mouse-ear cress)).